The primary structure comprises 315 residues: Protein TIFY 4B (315 aa).

The disordered stretch occupies residues 113–145 (CHRRDSPRSAEFSGSSGQFVADKDSHKTVSVSP). Residues 151 to 186 (TNAVVGQMTIFYSGKVNVYDGVPPEKARSIMHFAAN) enclose the Tify domain. The Jas motif lies at 233–260 (QANRKVSLQRYLEKRKDRRFSKTKKAPG). The short motif at 235–242 (NRKVSLQR) is the Nuclear localization signal element. Basic residues predominate over residues 248 to 257 (KDRRFSKTKK). Positions 248 to 315 (KDRRFSKTKK…LNSDLNSEDN (68 aa)) are disordered. Residues 293 to 315 (PENQTKSPNISVDLNSDLNSEDN) are compositionally biased toward polar residues.

The protein belongs to the TIFY/JAZ family. In terms of assembly, interacts with AFPH2/NINJA.

Its subcellular location is the nucleus. Its function is as follows. Regulates the arrest of dispersed meristematic cells during lamina development. The protein is Protein TIFY 4B (TIFY4B) of Arabidopsis thaliana (Mouse-ear cress).